A 274-amino-acid polypeptide reads, in one-letter code: Diaminopimelate epimerase (274 aa).

Substrate contacts are provided by N11, Q44, and N64. The active-site Proton donor is the C73. Residues 74-75, N157, N190, and 208-209 contribute to the substrate site; these read GN and ER. Residue C217 is the Proton acceptor of the active site. 218 to 219 is a binding site for substrate; it reads GS.

It belongs to the diaminopimelate epimerase family. Homodimer.

The protein resides in the cytoplasm. It catalyses the reaction (2S,6S)-2,6-diaminopimelate = meso-2,6-diaminopimelate. The protein operates within amino-acid biosynthesis; L-lysine biosynthesis via DAP pathway; DL-2,6-diaminopimelate from LL-2,6-diaminopimelate: step 1/1. Its function is as follows. Catalyzes the stereoinversion of LL-2,6-diaminopimelate (L,L-DAP) to meso-diaminopimelate (meso-DAP), a precursor of L-lysine and an essential component of the bacterial peptidoglycan. The polypeptide is Diaminopimelate epimerase (Serratia proteamaculans (strain 568)).